The sequence spans 393 residues: F-box protein KIB4 (393 aa).

The 48-residue stretch at 12–59 folds into the F-box domain; that stretch reads AKQPILVLDLVRLVLERLSFVDFHRARCVSSVWYSASKSCIGGTNPTA.

Its subcellular location is the cytoplasm. It is found in the nucleus. The protein localises to the nucleolus. In terms of biological role, component of SCF(ASK-cullin-F-box) E3 ubiquitin ligase complexes, which may mediate the ubiquitination and subsequent proteasomal degradation of target proteins. Required for brassinosteroid (BR) signal transduction. Mediates ASK7/BIN2/SK21 inactivation both by competing with substrate binding (e.g. BZR1) and by promoting its ubiquitination and subsequent proteasomal degradation. The chain is F-box protein KIB4 from Arabidopsis thaliana (Mouse-ear cress).